The following is a 234-amino-acid chain: Phosphoribosylaminoimidazole-succinocarboxamide synthase (234 aa).

This sequence belongs to the SAICAR synthetase family.

It catalyses the reaction 5-amino-1-(5-phospho-D-ribosyl)imidazole-4-carboxylate + L-aspartate + ATP = (2S)-2-[5-amino-1-(5-phospho-beta-D-ribosyl)imidazole-4-carboxamido]succinate + ADP + phosphate + 2 H(+). It functions in the pathway purine metabolism; IMP biosynthesis via de novo pathway; 5-amino-1-(5-phospho-D-ribosyl)imidazole-4-carboxamide from 5-amino-1-(5-phospho-D-ribosyl)imidazole-4-carboxylate: step 1/2. This Clostridium botulinum (strain Loch Maree / Type A3) protein is Phosphoribosylaminoimidazole-succinocarboxamide synthase.